The following is a 1021-amino-acid chain: Contactin-1 (1021 aa).

A signal peptide spans 1-20 (MKTPLLVSHLLLISLTSCLG). Ig-like C2-type domains follow at residues 41–131 (PIFE…ATLS), 137–223 (PFPP…KSVF), 241–326 (PADI…ARIY), 331–407 (PEWV…AELK), 413–500 (PTFE…GTLV), and 504–603 (PTRI…LVVR). 2 disulfides stabilise this stretch: Cys65–Cys114 and Cys158–Cys211. Residues Asn208 and Asn258 are each glycosylated (N-linked (GlcNAc...) asparagine). Cys263 and Cys310 form a disulfide bridge. N-linked (GlcNAc...) asparagine glycosylation occurs at Asn338. 2 cysteine pairs are disulfide-bonded: Cys352–Cys391 and Cys436–Cys484. Asn457, Asn473, Asn494, and Asn521 each carry an N-linked (GlcNAc...) asparagine glycan. A disulfide bridge connects residues Cys526 and Cys585. N-linked (GlcNAc...) asparagine glycosylation occurs at Asn593. Fibronectin type-III domains lie at 608–706 (PPGG…TDGA), 711–808 (APSD…SAQD), 813–908 (APTE…APPS), and 909–1002 (QPPR…TLSS). Residues 695 to 719 (SIPSNRIKTDGAAPNVAPSDVGGGG) form a disordered region. The N-linked (GlcNAc...) asparagine glycan is linked to Asn935. A lipid anchor (GPI-anchor amidated serine) is attached at Ser1001. A propeptide spans 1002-1021 (SGLLSLLLPSLGFLVFYSEF) (removed in mature form).

Belongs to the immunoglobulin superfamily. Contactin family. In terms of assembly, monomer. Interacts with NOTCH1. Interacts with CNTNAP1 in cis form and TNR. Binds to the carbonic-anhydrase like domain of PTPRZ1. Detected in a complex with NRCAM and PTPRB. Interacts with TASOR. As to expression, expressed by neurons, oligodendrocytes and their progenitors (at protein level). Myelination regulates the expression being down-regulated when neurons are in contact with Schwann cells.

The protein resides in the cell membrane. Contactins mediate cell surface interactions during nervous system development. Involved in the formation of paranodal axo-glial junctions in myelinated peripheral nerves and in the signaling between axons and myelinating glial cells via its association with CNTNAP1. Participates in oligodendrocytes generation by acting as a ligand of NOTCH1. Its association with NOTCH1 promotes NOTCH1 activation through the released notch intracellular domain (NICD) and subsequent translocation to the nucleus. Interaction with TNR induces a repulsion of neurons and an inhibition of neurite outgrowth. The polypeptide is Contactin-1 (Cntn1) (Rattus norvegicus (Rat)).